Consider the following 202-residue polypeptide: Recombination protein RecR (202 aa).

The C4-type zinc-finger motif lies at 61-76 (CARCNSFTEDDICATC). The Toprim domain occupies 84-179 (SVLCVVETPA…KVTRLARGVP (96 aa)).

This sequence belongs to the RecR family.

May play a role in DNA repair. It seems to be involved in an RecBC-independent recombinational process of DNA repair. It may act with RecF and RecO. The protein is Recombination protein RecR of Bordetella petrii (strain ATCC BAA-461 / DSM 12804 / CCUG 43448).